Here is a 482-residue protein sequence, read N- to C-terminus: Membrane-bound lytic murein transglycosylase F (482 aa).

Positions 1 to 18 are cleaved as a signal peptide; that stretch reads MKGLFIRIVLAICLSLWA. The tract at residues 19 to 266 is non-LT domain; that stretch reads IDMVFPWQQI…RIEEKYFNHL (248 aa). Residues 267–482 form an LT domain region; it reads NQFDYVDTRS…ISTQTQQEQR (216 aa). The active site involves Glu-311.

In the N-terminal section; belongs to the bacterial solute-binding protein 3 family. It in the C-terminal section; belongs to the transglycosylase Slt family.

It is found in the cell outer membrane. It carries out the reaction Exolytic cleavage of the (1-&gt;4)-beta-glycosidic linkage between N-acetylmuramic acid (MurNAc) and N-acetylglucosamine (GlcNAc) residues in peptidoglycan, from either the reducing or the non-reducing ends of the peptidoglycan chains, with concomitant formation of a 1,6-anhydrobond in the MurNAc residue.. Murein-degrading enzyme that degrades murein glycan strands and insoluble, high-molecular weight murein sacculi, with the concomitant formation of a 1,6-anhydromuramoyl product. Lytic transglycosylases (LTs) play an integral role in the metabolism of the peptidoglycan (PG) sacculus. Their lytic action creates space within the PG sacculus to allow for its expansion as well as for the insertion of various structures such as secretion systems and flagella. In Histophilus somni (strain 129Pt) (Haemophilus somnus), this protein is Membrane-bound lytic murein transglycosylase F.